The following is a 297-amino-acid chain: MSTFPASLLILNGKGANEPQLREAVNLLRDEGIDIHVRVTWEKGDAVRFIDEALQLNVETVIAGGGDGTINEVATALVERGSKMALGILPLGTANDFATSVGIPQDLASALKLAIVGRDVPIDIARVNDKTGFINMATGGFGTRITTETPEKLKAALGGVSYLIHGLMRMDTLKPDRCEIRGENFHWQGDALVIGIGNGRQAGGGQQLCPEALINDGLLHLRIFTGEELIPALFSTLANPENSPNIVDGVSSWFEITAPHEMTFNLDGEPLSGKTFRMELLPAALRCRLPPDCPLLR.

The DAGKc domain maps to 2-131 (STFPASLLIL…IDIARVNDKT (130 aa)). ATP contacts are provided by residues T40, 66–72 (GDGTINE), and T93. Mg(2+)-binding residues include L213, D216, and L218. The active-site Proton acceptor is E269.

Belongs to the diacylglycerol/lipid kinase family. YegS lipid kinase subfamily. Requires Mg(2+) as cofactor. Ca(2+) serves as cofactor.

The protein localises to the cytoplasm. In terms of biological role, probably phosphorylates lipids; the in vivo substrate is unknown. This Klebsiella pneumoniae (strain 342) protein is Probable lipid kinase YegS-like.